Reading from the N-terminus, the 361-residue chain is Phenylalanine--tRNA ligase alpha subunit (361 aa).

Residue Glu260 participates in Mg(2+) binding.

It belongs to the class-II aminoacyl-tRNA synthetase family. Phe-tRNA synthetase alpha subunit type 1 subfamily. Tetramer of two alpha and two beta subunits. Mg(2+) is required as a cofactor.

It is found in the cytoplasm. The catalysed reaction is tRNA(Phe) + L-phenylalanine + ATP = L-phenylalanyl-tRNA(Phe) + AMP + diphosphate + H(+). The sequence is that of Phenylalanine--tRNA ligase alpha subunit from Allorhizobium ampelinum (strain ATCC BAA-846 / DSM 112012 / S4) (Agrobacterium vitis (strain S4)).